Reading from the N-terminus, the 262-residue chain is Flap endonuclease Xni (262 aa).

A Mg(2+)-binding site is contributed by aspartate 112. Positions 171 to 258 constitute a 5'-3' exonuclease domain; it reads QQLNDYWAIT…GFNLKDLRYT (88 aa). Residues isoleucine 179, valine 190, and isoleucine 193 each coordinate K(+). Residues 192-197 are interaction with DNA; it reads GIGSKG.

This sequence belongs to the Xni family. Requires Mg(2+) as cofactor. The cofactor is K(+).

In terms of biological role, has flap endonuclease activity. During DNA replication, flap endonucleases cleave the 5'-overhanging flap structure that is generated by displacement synthesis when DNA polymerase encounters the 5'-end of a downstream Okazaki fragment. The protein is Flap endonuclease Xni of Psychromonas ingrahamii (strain DSM 17664 / CCUG 51855 / 37).